The chain runs to 156 residues: 1-methylthio-D-xylulose 5-phosphate methylsulfurylase (156 aa).

Residues 55-122 (YFEVGPGGHS…ADEALGFLCM (68 aa)) enclose the Cupin type-2 domain. 4 residues coordinate Mn(2+): Glu67, His69, His73, and His107. Residue Cys121 is part of the active site.

The enzyme catalyses S-methyl-1-thio-D-xylulose 5-phosphate + glutathione = S-(methylsulfanyl)glutathione + 1-deoxy-D-xylulose 5-phosphate. It catalyses the reaction S-(methylsulfanyl)glutathione + AH2 = methanethiol + glutathione + A. The protein operates within amino-acid biosynthesis; L-methionine biosynthesis via salvage pathway. Its pathway is metabolic intermediate biosynthesis; 1-deoxy-D-xylulose 5-phosphate biosynthesis. In terms of biological role, catalyzes the formation of S-(methylsulfanyl)glutathione and 1-deoxy-D-xylulose 5-phosphate (DXP) from 1-methylthioxylulose 5-phosphate (MTXu-5P). The S-(methylsulfanyl)glutathione is reductively cleaved to relase methanethiol in a second reaction. Involved in the MTA-isoprenoid shunt of the methionine salvage pathway. The sequence is that of 1-methylthio-D-xylulose 5-phosphate methylsulfurylase from Rhodospirillum rubrum (strain ATCC 11170 / ATH 1.1.1 / DSM 467 / LMG 4362 / NCIMB 8255 / S1).